Reading from the N-terminus, the 258-residue chain is Imidazole glycerol phosphate synthase subunit HisF (258 aa).

Catalysis depends on residues Asp-12 and Asp-131.

This sequence belongs to the HisA/HisF family. As to quaternary structure, heterodimer of HisH and HisF.

It localises to the cytoplasm. It catalyses the reaction 5-[(5-phospho-1-deoxy-D-ribulos-1-ylimino)methylamino]-1-(5-phospho-beta-D-ribosyl)imidazole-4-carboxamide + L-glutamine = D-erythro-1-(imidazol-4-yl)glycerol 3-phosphate + 5-amino-1-(5-phospho-beta-D-ribosyl)imidazole-4-carboxamide + L-glutamate + H(+). The protein operates within amino-acid biosynthesis; L-histidine biosynthesis; L-histidine from 5-phospho-alpha-D-ribose 1-diphosphate: step 5/9. IGPS catalyzes the conversion of PRFAR and glutamine to IGP, AICAR and glutamate. The HisF subunit catalyzes the cyclization activity that produces IGP and AICAR from PRFAR using the ammonia provided by the HisH subunit. This is Imidazole glycerol phosphate synthase subunit HisF from Corynebacterium glutamicum (strain R).